A 664-amino-acid polypeptide reads, in one-letter code: MNSRSCICVSAMKPCCRFLISFRSSSLFGFSPPNSGKFINSSKLHCTKIDSRSIRSGIHCRRIVLDRNAFCDSDSISWGGGGSRVLRARGSSRGRGRGVLVIPHVASDFRNYSTSSLDSHVNDKSFESMFVKPLVFKEVEKTEGIPKRERGNVGGGKDANFGNVGVRKETERCLSQTEVEKEAWKLLRGAVVNYCGFPVGTVAANDPGDTQTLNYDQVFIRDFVPSAYAFMLDGEGEIVRNFLLHTLQLQSWEKTVDCHSPGPGLMPASFKVKSAPLEGNDGSFEEFLDPDFGGSAIGRVSPVDSGLWWIILLRAYGKLTGDYTLQERIDVQTGIKLILKLCLADGFDMFPTLLVTDGSCMVDRRMGIHGHPLEIQALFYSALRCAREMLIVNDGTKSLVTAVNNRLSALSFHIREYYWVDIKKINEIYRYNTEEYSADATNKFNIYPEQIPTWLVDWIPDKGGYFIGNLQPAHMDFRFFTLGNLWAVISSLGNQEQNEGVMTLIEEKWDDLVANMPLKICFPALEKDEWRIITGSDPKNTPWSYHNGGSWPTLLWQFTLACIKMGKLELAKKAVAVAEKRLKEDEWPEYYDTKSGRFVGKQSRLYQTWTIAGFLAAKKLIEQPEKASLLFWEEDYQLLETCVCGLSKSSGRKNKCSRFTPPRS.

S41, S125, and S657 each carry phosphoserine.

The protein belongs to the glycosyl hydrolase 100 family. Expressed in seedlings, roots and flowers.

It localises to the mitochondrion. The catalysed reaction is Hydrolysis of terminal non-reducing beta-D-fructofuranoside residues in beta-D-fructofuranosides.. Its function is as follows. Mitochondrial invertase that cleaves sucrose into glucose and fructose and is involved in the regulation of aerial tissue development and floral transition. May be modulating hormone balance in relation to the radicle emergence. In Arabidopsis thaliana (Mouse-ear cress), this protein is Alkaline/neutral invertase C, mitochondrial.